The chain runs to 267 residues: PHD finger protein ALFIN-LIKE 7 (267 aa).

The tract at residues 162–207 is disordered; it reads TKVSNGSSKSNKSNPKPSKQSNSNSKPAKPPQPKDEEDSGPEGAED. Residues 165 to 188 show a composition bias toward low complexity; sequence SNGSSKSNKSNPKPSKQSNSNSKP. Residues 196–207 are compositionally biased toward acidic residues; that stretch reads DEEDSGPEGAED. The segment at 211-263 adopts a PHD-type zinc-finger fold; that stretch reads AYMCGACGETYANGEFWICCDVCEKWFHGKCVRITPAKAEHIKQYKCPGCSSK.

Belongs to the Alfin family. In terms of assembly, interacts with H3K4me3 and to a lesser extent with H3K4me2.

The protein localises to the nucleus. Functionally, histone-binding component that specifically recognizes H3 tails trimethylated on 'Lys-4' (H3K4me3), which mark transcription start sites of virtually all active genes. The protein is PHD finger protein ALFIN-LIKE 7 of Oryza sativa subsp. indica (Rice).